The chain runs to 440 residues: NADH-quinone oxidoreductase subunit H (440 aa).

A run of 9 helical transmembrane segments spans residues 11-31 (VWLIIVKVVILFVILLAWTIF), 83-103 (IVFNLAPVIAGIACFASWSVI), 123-143 (VPVAVLFILAVASIGIYGVVL), 164-184 (MISYEVAMGLSLVTVFIFSGS), 207-227 (IAGHYWLLLIPSFVIYVITMF), 261-281 (FLAEYINMATLSAVCTTLFLG), 299-319 (WWGLLWFFLKTQLVIFFFVWV), 331-351 (FMDLGWKVLIPVSLGWVLLVA), and 366-386 (VFLVVVGVILVALIVWAFMGG).

It belongs to the complex I subunit 1 family. In terms of assembly, NDH-1 is composed of 14 different subunits. Subunits NuoA, H, J, K, L, M, N constitute the membrane sector of the complex.

The protein localises to the cell membrane. The catalysed reaction is a quinone + NADH + 5 H(+)(in) = a quinol + NAD(+) + 4 H(+)(out). NDH-1 shuttles electrons from NADH, via FMN and iron-sulfur (Fe-S) centers, to quinones in the respiratory chain. The immediate electron acceptor for the enzyme in this species is believed to be ubiquinone. Couples the redox reaction to proton translocation (for every two electrons transferred, four hydrogen ions are translocated across the cytoplasmic membrane), and thus conserves the redox energy in a proton gradient. This subunit may bind ubiquinone. This Cutibacterium acnes (strain DSM 16379 / KPA171202) (Propionibacterium acnes) protein is NADH-quinone oxidoreductase subunit H.